We begin with the raw amino-acid sequence, 75 residues long: U6-lycotoxin-Ls1c (75 aa).

An N-terminal signal peptide occupies residues 1 to 21 (MKLLLFTALVLVVISLIEVEA). Residues 22–25 (ENER) constitute a propeptide that is removed on maturation. 4 disulfide bridges follow: cysteine 27–cysteine 42, cysteine 34–cysteine 47, cysteine 41–cysteine 65, and cysteine 49–cysteine 63.

This sequence belongs to the neurotoxin 19 (CSTX) family. 06 (U6-Lctx) subfamily. In terms of tissue distribution, expressed by the venom gland.

The protein resides in the secreted. This is U6-lycotoxin-Ls1c from Lycosa singoriensis (Wolf spider).